The primary structure comprises 297 residues: Probable endonuclease 4 (297 aa).

The tract at residues 1 to 21 is disordered; the sequence is MPEIGAHVSAAGGPQRAPERG. Zn(2+) is bound by residues histidine 67, histidine 107, glutamate 145, aspartate 179, histidine 182, histidine 216, aspartate 229, histidine 231, and glutamate 261.

This sequence belongs to the AP endonuclease 2 family. Zn(2+) serves as cofactor.

The catalysed reaction is Endonucleolytic cleavage to 5'-phosphooligonucleotide end-products.. Endonuclease IV plays a role in DNA repair. It cleaves phosphodiester bonds at apurinic or apyrimidinic (AP) sites, generating a 3'-hydroxyl group and a 5'-terminal sugar phosphate. The chain is Probable endonuclease 4 from Halorhodospira halophila (strain DSM 244 / SL1) (Ectothiorhodospira halophila (strain DSM 244 / SL1)).